The primary structure comprises 501 residues: L-arabinose isomerase (501 aa).

Mn(2+)-binding residues include Glu306, Glu333, His350, and His450.

It belongs to the arabinose isomerase family. In terms of assembly, homohexamer. Mn(2+) serves as cofactor.

The enzyme catalyses beta-L-arabinopyranose = L-ribulose. It functions in the pathway carbohydrate degradation; L-arabinose degradation via L-ribulose; D-xylulose 5-phosphate from L-arabinose (bacterial route): step 1/3. Catalyzes the conversion of L-arabinose to L-ribulose. In Erwinia tasmaniensis (strain DSM 17950 / CFBP 7177 / CIP 109463 / NCPPB 4357 / Et1/99), this protein is L-arabinose isomerase.